A 378-amino-acid chain; its full sequence is Acetylornithine deacetylase (378 aa).

H76 serves as a coordination point for Zn(2+). D78 is a catalytic residue. Residue D108 participates in Zn(2+) binding. Residue E140 is part of the active site. The Zn(2+) site is built by E141, E165, and H351.

The protein belongs to the peptidase M20A family. ArgE subfamily. As to quaternary structure, homodimer. Requires Zn(2+) as cofactor. The cofactor is Co(2+). Glutathione is required as a cofactor.

The protein localises to the cytoplasm. It catalyses the reaction N(2)-acetyl-L-ornithine + H2O = L-ornithine + acetate. Its pathway is amino-acid biosynthesis; L-arginine biosynthesis; L-ornithine from N(2)-acetyl-L-ornithine (linear): step 1/1. Catalyzes the hydrolysis of the amide bond of N(2)-acetylated L-amino acids. Cleaves the acetyl group from N-acetyl-L-ornithine to form L-ornithine, an intermediate in L-arginine biosynthesis pathway, and a branchpoint in the synthesis of polyamines. This is Acetylornithine deacetylase from Aliivibrio salmonicida (strain LFI1238) (Vibrio salmonicida (strain LFI1238)).